The following is a 160-amino-acid chain: Cytochrome b6-f complex subunit 4 (160 aa).

Helical transmembrane passes span Leu36 to Val56, Leu95 to Glu115, and Ala131 to Ile151.

This sequence belongs to the cytochrome b family. PetD subfamily. As to quaternary structure, the 4 large subunits of the cytochrome b6-f complex are cytochrome b6, subunit IV (17 kDa polypeptide, PetD), cytochrome f and the Rieske protein, while the 4 small subunits are PetG, PetL, PetM and PetN. The complex functions as a dimer.

The protein localises to the cellular thylakoid membrane. Its function is as follows. Component of the cytochrome b6-f complex, which mediates electron transfer between photosystem II (PSII) and photosystem I (PSI), cyclic electron flow around PSI, and state transitions. This is Cytochrome b6-f complex subunit 4 from Prochlorococcus marinus (strain SARG / CCMP1375 / SS120).